The following is a 231-amino-acid chain: Probable septum site-determining protein MinC (231 aa).

The interval 101–125 is disordered; that stretch reads GKEKAPRPAPTPQAPAQNTTPVTKT. Over residues 114–123 the composition is skewed to low complexity; it reads APAQNTTPVT.

Belongs to the MinC family. In terms of assembly, interacts with MinD and FtsZ.

Functionally, cell division inhibitor that blocks the formation of polar Z ring septums. Rapidly oscillates between the poles of the cell to destabilize FtsZ filaments that have formed before they mature into polar Z rings. Prevents FtsZ polymerization. The protein is Probable septum site-determining protein MinC of Escherichia coli (strain ATCC 8739 / DSM 1576 / NBRC 3972 / NCIMB 8545 / WDCM 00012 / Crooks).